The following is a 381-amino-acid chain: UDP-4-amino-4-deoxy-L-arabinose--oxoglutarate aminotransferase (381 aa).

The residue at position 182 (Lys182) is an N6-(pyridoxal phosphate)lysine.

This sequence belongs to the DegT/DnrJ/EryC1 family. ArnB subfamily. As to quaternary structure, homodimer. Pyridoxal 5'-phosphate is required as a cofactor.

The enzyme catalyses UDP-4-amino-4-deoxy-beta-L-arabinose + 2-oxoglutarate = UDP-beta-L-threo-pentopyranos-4-ulose + L-glutamate. It participates in nucleotide-sugar biosynthesis; UDP-4-deoxy-4-formamido-beta-L-arabinose biosynthesis; UDP-4-deoxy-4-formamido-beta-L-arabinose from UDP-alpha-D-glucuronate: step 2/3. It functions in the pathway bacterial outer membrane biogenesis; lipopolysaccharide biosynthesis. Its function is as follows. Catalyzes the conversion of UDP-4-keto-arabinose (UDP-Ara4O) to UDP-4-amino-4-deoxy-L-arabinose (UDP-L-Ara4N). The modified arabinose is attached to lipid A and is required for resistance to polymyxin and cationic antimicrobial peptides. The sequence is that of UDP-4-amino-4-deoxy-L-arabinose--oxoglutarate aminotransferase from Proteus mirabilis (strain HI4320).